A 512-amino-acid chain; its full sequence is Cytochrome P450 1A2 (512 aa).

A glycan (O-linked (GlcNAc) serine) is linked at Ser65. Phe222 is a substrate binding site. Cys454 is a binding site for heme.

It belongs to the cytochrome P450 family. Interacts with PGRMC1; the interaction requires PGRMC1 homodimerization. Heme is required as a cofactor. As to expression, constitutively expressed in liver.

Its subcellular location is the endoplasmic reticulum membrane. It localises to the microsome membrane. It carries out the reaction an organic molecule + reduced [NADPH--hemoprotein reductase] + O2 = an alcohol + oxidized [NADPH--hemoprotein reductase] + H2O + H(+). The enzyme catalyses 17beta-estradiol + reduced [NADPH--hemoprotein reductase] + O2 = 2-hydroxy-17beta-estradiol + oxidized [NADPH--hemoprotein reductase] + H2O + H(+). The catalysed reaction is 17beta-estradiol + reduced [NADPH--hemoprotein reductase] + O2 = 4-hydroxy-17beta-estradiol + oxidized [NADPH--hemoprotein reductase] + H2O + H(+). It catalyses the reaction estrone + reduced [NADPH--hemoprotein reductase] + O2 = 2-hydroxyestrone + oxidized [NADPH--hemoprotein reductase] + H2O + H(+). It carries out the reaction estrone + reduced [NADPH--hemoprotein reductase] + O2 = 4-hydroxyestrone + oxidized [NADPH--hemoprotein reductase] + H2O + H(+). The enzyme catalyses cholesterol + reduced [NADPH--hemoprotein reductase] + O2 = 25-hydroxycholesterol + oxidized [NADPH--hemoprotein reductase] + H2O + H(+). The catalysed reaction is all-trans-retinol + reduced [NADPH--hemoprotein reductase] + O2 = all-trans-retinal + oxidized [NADPH--hemoprotein reductase] + 2 H2O + H(+). It catalyses the reaction all-trans-retinal + reduced [NADPH--hemoprotein reductase] + O2 = all-trans-retinoate + oxidized [NADPH--hemoprotein reductase] + H2O + 2 H(+). It carries out the reaction (5Z,8Z,11Z,14Z)-eicosatetraenoate + reduced [NADPH--hemoprotein reductase] + O2 = (14R,15S)-epoxy-(5Z,8Z,11Z)-eicosatrienoate + oxidized [NADPH--hemoprotein reductase] + H2O + H(+). The enzyme catalyses (5Z,8Z,11Z,14Z)-eicosatetraenoate + reduced [NADPH--hemoprotein reductase] + O2 = (14S,15R)-epoxy-(5Z,8Z,11Z)-eicosatrienoate + oxidized [NADPH--hemoprotein reductase] + H2O + H(+). The catalysed reaction is (5Z,8Z,11Z,14Z,17Z)-eicosapentaenoate + reduced [NADPH--hemoprotein reductase] + O2 = (17R,18S)-epoxy-(5Z,8Z,11Z,14Z)-eicosatetraenoate + oxidized [NADPH--hemoprotein reductase] + H2O + H(+). It catalyses the reaction (4Z,7Z,10Z,13Z,16Z,19Z)-docosahexaenoate + reduced [NADPH--hemoprotein reductase] + O2 = (19R,20S)-epoxy-(4Z,7Z,10Z,13Z,16Z)-docosapentaenoate + oxidized [NADPH--hemoprotein reductase] + H2O + H(+). It carries out the reaction (5S)-hydroperoxy-(6E,8Z,11Z,14Z)-eicosatetraenoate = 5-oxo-(6E,8Z,11Z,14Z)-eicosatetraenoate + H2O. The enzyme catalyses (12S)-hydroperoxy-(5Z,8Z,10E,14Z)-eicosatetraenoate = 12-oxo-(5Z,8Z,10E,14Z)-eicosatetraenoate + H2O. The catalysed reaction is (15S)-hydroperoxy-(5Z,8Z,11Z,13E)-eicosatetraenoate = 15-oxo-(5Z,8Z,11Z,13E)-eicosatetraenoate + H2O. It catalyses the reaction (13S)-hydroperoxy-(9Z,11E)-octadecadienoate = 13-oxo-(9Z,11E)-octadecadienoate + H2O. It carries out the reaction (5Z,8Z,11Z,14Z)-eicosatetraenoate + reduced [NADPH--hemoprotein reductase] + O2 = 13-hydroxy-(5Z,8Z,11Z,14Z)-eicosatetraenoate + oxidized [NADPH--hemoprotein reductase] + H2O + H(+). The enzyme catalyses (5Z,8Z,11Z,14Z)-eicosatetraenoate + reduced [NADPH--hemoprotein reductase] + O2 = 19-hydroxy-(5Z,8Z,11Z,14Z)-eicosatetraenoate + oxidized [NADPH--hemoprotein reductase] + H2O + H(+). The catalysed reaction is (9Z,12Z)-octadecadienoate + reduced [NADPH--hemoprotein reductase] + O2 = 11-hydroxy-(9Z,12Z)-octadecadienoate + oxidized [NADPH--hemoprotein reductase] + H2O + H(+). It functions in the pathway cofactor metabolism; retinol metabolism. Its pathway is steroid metabolism; cholesterol metabolism. It participates in lipid metabolism; arachidonate metabolism. In terms of biological role, a cytochrome P450 monooxygenase involved in the metabolism of various endogenous substrates, including fatty acids, steroid hormones and vitamins. Mechanistically, uses molecular oxygen inserting one oxygen atom into a substrate, and reducing the second into a water molecule, with two electrons provided by NADPH via cytochrome P450 reductase (NADPH--hemoprotein reductase). Catalyzes the hydroxylation of carbon-hydrogen bonds. Exhibits high catalytic activity for the formation of hydroxyestrogens from estrone (E1) and 17beta-estradiol (E2), namely 2-hydroxy E1 and E2. Metabolizes cholesterol toward 25-hydroxycholesterol, a physiological regulator of cellular cholesterol homeostasis. May act as a major enzyme for all-trans retinoic acid biosynthesis in the liver. Catalyzes two successive oxidative transformation of all-trans retinol to all-trans retinal and then to the active form all-trans retinoic acid. Primarily catalyzes stereoselective epoxidation of the last double bond of polyunsaturated fatty acids (PUFA), displaying a strong preference for the (R,S) stereoisomer. Catalyzes bisallylic hydroxylation and omega-1 hydroxylation of PUFA. May also participate in eicosanoids metabolism by converting hydroperoxide species into oxo metabolites (lipoxygenase-like reaction, NADPH-independent). Plays a role in the oxidative metabolism of xenobiotics. Catalyzes the N-hydroxylation of heterocyclic amines and the O-deethylation of phenacetin. Metabolizes caffeine via N3-demethylation. The chain is Cytochrome P450 1A2 (CYP1A2) from Canis lupus familiaris (Dog).